The following is a 609-amino-acid chain: Membrane protein insertase YidC (609 aa).

5 helical membrane-spanning segments follow: residues 8–28 (LILA…LFPP), 381–401 (MGWS…PLAL), 451–471 (LPIL…FVTI), 509–529 (SLTA…SMWL), and 545–565 (IFAW…SGLV).

It belongs to the OXA1/ALB3/YidC family. Type 1 subfamily. As to quaternary structure, interacts with the Sec translocase complex via SecD. Specifically interacts with transmembrane segments of nascent integral membrane proteins during membrane integration.

It is found in the cell inner membrane. Its function is as follows. Required for the insertion and/or proper folding and/or complex formation of integral membrane proteins into the membrane. Involved in integration of membrane proteins that insert both dependently and independently of the Sec translocase complex, as well as at least some lipoproteins. Aids folding of multispanning membrane proteins. The chain is Membrane protein insertase YidC from Ruegeria pomeroyi (strain ATCC 700808 / DSM 15171 / DSS-3) (Silicibacter pomeroyi).